The primary structure comprises 202 residues: NAD(P)H dehydrogenase (quinone) 2 (202 aa).

Residues Val-4–Val-190 enclose the Flavodoxin-like domain. FMN-binding positions include Ser-10–Ile-15 and Thr-78–Phe-80. Tyr-12 serves as a coordination point for NAD(+). Trp-98 contributes to the substrate binding site. FMN-binding positions include Ser-113–Gly-119 and His-134.

The protein belongs to the WrbA family. Requires FMN as cofactor.

The enzyme catalyses a quinone + NADH + H(+) = a quinol + NAD(+). It catalyses the reaction a quinone + NADPH + H(+) = a quinol + NADP(+). This is NAD(P)H dehydrogenase (quinone) 2 from Rhizobium meliloti (strain 1021) (Ensifer meliloti).